The chain runs to 355 residues: Syntaxin-5 (355 aa).

The Cytoplasmic portion of the chain corresponds to 1–333 (MIPRKRYGSK…KYFQSVTSNR (333 aa)). Residues 245–247 (IDM) carry the IxM motif; signal for cargo packaging into COPII-coated vesicles motif. A t-SNARE coiled-coil homology domain is found at 263–325 (DSYIQSRADT…EAAHSEILKY (63 aa)). Positions 287-318 (FQQLAHMVKEQEETIQRIDENVLGAQLDVEAA) form a coiled coil. Residues 334 to 354 (WLMVKIFLILIVFFIIFVVFL) form a helical; Anchor for type IV membrane protein membrane-spanning segment. Residue alanine 355 is a topological domain, vesicular.

Belongs to the syntaxin family. As to quaternary structure, part of a ternary complex containing STX5A, NSFL1C and VCP. Part of a unique SNARE complex composed of the Golgi SNAREs GOSR1, GOSR2 and YKT6. This complex also includes VTI1A. Component of a SNARE complex consisting of STX5, YKT6, GOSR1 and BET1L. Interacts with BET1L. Interacts with BET1. Interacts with COG4. Interacts with GM130/GOLGA2. Interacts (via IxM motif) with SEC24C and SEC24D; mediates STX5 packaging into COPII-coated vesicles. Interacts with VLDLR; this interaction mediates VLDLR translocation from the endoplasmic reticulum to the plasma membrane. Expressed in the brain, heart, spleen, lung, liver, kidney and testis.

It localises to the endoplasmic reticulum-Golgi intermediate compartment membrane. Its subcellular location is the golgi apparatus membrane. Mediates endoplasmic reticulum to Golgi transport. Together with p115/USO1 and GM130/GOLGA2, involved in vesicle tethering and fusion at the cis-Golgi membrane to maintain the stacked and inter-connected structure of the Golgi apparatus. Its function is as follows. Required for Golgi to endoplasmic reticulum retrogade transport, and for intra-Golgi transport. The polypeptide is Syntaxin-5 (Stx5) (Rattus norvegicus (Rat)).